The chain runs to 534 residues: Acetyltransferase MATC1 (534 aa).

Active-site proton acceptor residues include His186 and Asp459.

This sequence belongs to the plant acyltransferase family.

The protein resides in the cell membrane. Its pathway is secondary metabolite biosynthesis. Its function is as follows. Acetyltransferase; part of the gene cluster that mediates the biosynthesis of mannosylerythritol lipids (MELs), surface-active substances that enhance the availability of water-insoluble substrates. Mannosylerythritol lipid production is responsible for hemolytic activity of Ustilago maydis. Depending on the number of acetyl groups, mannosylerythritol lipids can be differentiated into MEL A (fully acetylated), MEL B and MEL C (monoacetylated at R-6 and R-4, respectively), and the fully deacetylated MEL D. The first step in the pathway is the generation of mannosylerythritol by the glycosyltransferase EMT1 which catalyzes the transfer of GDP-mannose to the C-4 atom of meso-erythritol. This reaction has to be stereospecific, since only mannosyl-D-erythritol is generated. The produced disaccharide is subsequently acylated with fatty acids of various lengths derived from the peroxisomal beta-oxidation by the peroxisomal acyltransferases MAC1 and MAC2 at positions C-2 and C-3, repectively. The existence of MEL derivatives which carry an acetyl group at C-2 implies that at least MAC1 also accepts acetyl-CoA as a donor. The final step of MEL biosynthesis is the acetylation of the fully acylated mannosylerythritol lipids catalyzed by the acetyl-CoA-dependent acetyltransferase MAT1. MAT1 displays a relaxed regioselectivity and is able to transfer acetylgroups to both positions C-4 and C-6 of the mannosyl moiety. The chain is Acetyltransferase MATC1 from Mycosarcoma maydis (Corn smut fungus).